The following is a 279-amino-acid chain: Shikimate dehydrogenase (NADP(+)) (279 aa).

Residues 16 to 18 (SRS) and Thr63 contribute to the shikimate site. Residue Lys67 is the Proton acceptor of the active site. The shikimate site is built by Asn88 and Asp103. Residues 128–132 (GAGGA) and Met219 each bind NADP(+). Tyr221 is a shikimate binding site. Gly243 provides a ligand contact to NADP(+).

The protein belongs to the shikimate dehydrogenase family. As to quaternary structure, homodimer.

The catalysed reaction is shikimate + NADP(+) = 3-dehydroshikimate + NADPH + H(+). It functions in the pathway metabolic intermediate biosynthesis; chorismate biosynthesis; chorismate from D-erythrose 4-phosphate and phosphoenolpyruvate: step 4/7. Its function is as follows. Involved in the biosynthesis of the chorismate, which leads to the biosynthesis of aromatic amino acids. Catalyzes the reversible NADPH linked reduction of 3-dehydroshikimate (DHSA) to yield shikimate (SA). This chain is Shikimate dehydrogenase (NADP(+)), found in Aromatoleum aromaticum (strain DSM 19018 / LMG 30748 / EbN1) (Azoarcus sp. (strain EbN1)).